We begin with the raw amino-acid sequence, 340 residues long: Anthranilate phosphoribosyltransferase (340 aa).

Residues Gly78, 81–82 (GD), Thr86, 88–91 (NIST), 106–114 (KHGNRSVSS), and Ser118 contribute to the 5-phospho-alpha-D-ribose 1-diphosphate site. An anthranilate-binding site is contributed by Gly78. Ser90 contributes to the Mg(2+) binding site. Position 109 (Asn109) interacts with anthranilate. An anthranilate-binding site is contributed by Arg164. The Mg(2+) site is built by Asp223 and Glu224.

It belongs to the anthranilate phosphoribosyltransferase family. In terms of assembly, homodimer. It depends on Mg(2+) as a cofactor.

It catalyses the reaction N-(5-phospho-beta-D-ribosyl)anthranilate + diphosphate = 5-phospho-alpha-D-ribose 1-diphosphate + anthranilate. The protein operates within amino-acid biosynthesis; L-tryptophan biosynthesis; L-tryptophan from chorismate: step 2/5. Catalyzes the transfer of the phosphoribosyl group of 5-phosphorylribose-1-pyrophosphate (PRPP) to anthranilate to yield N-(5'-phosphoribosyl)-anthranilate (PRA). This is Anthranilate phosphoribosyltransferase from Bacillus pumilus (Bacillus mesentericus).